Here is a 335-residue protein sequence, read N- to C-terminus: Holliday junction branch migration complex subunit RuvB (335 aa).

The segment at 1 to 181 (MSERVISPEP…FGLLIRLNLY (181 aa)) is large ATPase domain (RuvB-L). ATP-binding positions include L20, R21, G62, K65, T66, T67, 128–130 (EDF), R171, Y181, and R218. Residue T66 participates in Mg(2+) binding. Residues 182-252 (SPEDLEKIVT…IAGAGLALLQ (71 aa)) form a small ATPAse domain (RuvB-S) region. The tract at residues 255-335 (ELGLDDIDRR…KLNHSQKTLF (81 aa)) is head domain (RuvB-H). DNA is bound by residues R310 and R315.

Belongs to the RuvB family. Homohexamer. Forms an RuvA(8)-RuvB(12)-Holliday junction (HJ) complex. HJ DNA is sandwiched between 2 RuvA tetramers; dsDNA enters through RuvA and exits via RuvB. An RuvB hexamer assembles on each DNA strand where it exits the tetramer. Each RuvB hexamer is contacted by two RuvA subunits (via domain III) on 2 adjacent RuvB subunits; this complex drives branch migration. In the full resolvosome a probable DNA-RuvA(4)-RuvB(12)-RuvC(2) complex forms which resolves the HJ.

The protein localises to the cytoplasm. The catalysed reaction is ATP + H2O = ADP + phosphate + H(+). In terms of biological role, the RuvA-RuvB-RuvC complex processes Holliday junction (HJ) DNA during genetic recombination and DNA repair, while the RuvA-RuvB complex plays an important role in the rescue of blocked DNA replication forks via replication fork reversal (RFR). RuvA specifically binds to HJ cruciform DNA, conferring on it an open structure. The RuvB hexamer acts as an ATP-dependent pump, pulling dsDNA into and through the RuvAB complex. RuvB forms 2 homohexamers on either side of HJ DNA bound by 1 or 2 RuvA tetramers; 4 subunits per hexamer contact DNA at a time. Coordinated motions by a converter formed by DNA-disengaged RuvB subunits stimulates ATP hydrolysis and nucleotide exchange. Immobilization of the converter enables RuvB to convert the ATP-contained energy into a lever motion, pulling 2 nucleotides of DNA out of the RuvA tetramer per ATP hydrolyzed, thus driving DNA branch migration. The RuvB motors rotate together with the DNA substrate, which together with the progressing nucleotide cycle form the mechanistic basis for DNA recombination by continuous HJ branch migration. Branch migration allows RuvC to scan DNA until it finds its consensus sequence, where it cleaves and resolves cruciform DNA. This is Holliday junction branch migration complex subunit RuvB from Methanoregula boonei (strain DSM 21154 / JCM 14090 / 6A8).